A 229-amino-acid polypeptide reads, in one-letter code: Deoxyribose-phosphate aldolase (229 aa).

Residue Asp-84 is the Proton donor/acceptor of the active site. Lys-146 (schiff-base intermediate with acetaldehyde) is an active-site residue. Lys-188 (proton donor/acceptor) is an active-site residue.

Belongs to the DeoC/FbaB aldolase family. DeoC type 1 subfamily.

It is found in the cytoplasm. The catalysed reaction is 2-deoxy-D-ribose 5-phosphate = D-glyceraldehyde 3-phosphate + acetaldehyde. It functions in the pathway carbohydrate degradation; 2-deoxy-D-ribose 1-phosphate degradation; D-glyceraldehyde 3-phosphate and acetaldehyde from 2-deoxy-alpha-D-ribose 1-phosphate: step 2/2. Catalyzes a reversible aldol reaction between acetaldehyde and D-glyceraldehyde 3-phosphate to generate 2-deoxy-D-ribose 5-phosphate. The sequence is that of Deoxyribose-phosphate aldolase from Pyrobaculum neutrophilum (strain DSM 2338 / JCM 9278 / NBRC 100436 / V24Sta) (Thermoproteus neutrophilus).